A 380-amino-acid chain; its full sequence is Probable acyl-CoA dehydrogenase YngJ (380 aa).

FAD-binding positions include 123-132 (FGLTEPNAGS), 156-158 (WIT), arginine 269, and 337-341 (QIHGG). Glutamate 364 functions as the Proton acceptor in the catalytic mechanism. 366-368 (TSE) contacts FAD.

Belongs to the acyl-CoA dehydrogenase family. It depends on FAD as a cofactor.

It catalyses the reaction a 2,3-saturated acyl-CoA + A = a 2,3-dehydroacyl-CoA + AH2. The chain is Probable acyl-CoA dehydrogenase YngJ (yngJ) from Bacillus subtilis (strain 168).